A 446-amino-acid chain; its full sequence is tRNA-2-methylthio-N(6)-dimethylallyladenosine synthase (446 aa).

The MTTase N-terminal domain occupies 8–124 (KTYRVKSFGC…LPGMIDAAVA (117 aa)). Residues C17, C53, C87, C160, C164, and C167 each coordinate [4Fe-4S] cluster. The Radical SAM core domain maps to 146–378 (RKSAPSAFLT…QAALNRDQAA (233 aa)). The 62-residue stretch at 381 to 442 (AGSVGRTCEV…PNSLAGQLLE (62 aa)) folds into the TRAM domain.

It belongs to the methylthiotransferase family. MiaB subfamily. In terms of assembly, monomer. It depends on [4Fe-4S] cluster as a cofactor.

It localises to the cytoplasm. The catalysed reaction is N(6)-dimethylallyladenosine(37) in tRNA + (sulfur carrier)-SH + AH2 + 2 S-adenosyl-L-methionine = 2-methylsulfanyl-N(6)-dimethylallyladenosine(37) in tRNA + (sulfur carrier)-H + 5'-deoxyadenosine + L-methionine + A + S-adenosyl-L-homocysteine + 2 H(+). In terms of biological role, catalyzes the methylthiolation of N6-(dimethylallyl)adenosine (i(6)A), leading to the formation of 2-methylthio-N6-(dimethylallyl)adenosine (ms(2)i(6)A) at position 37 in tRNAs that read codons beginning with uridine. In Erythrobacter litoralis (strain HTCC2594), this protein is tRNA-2-methylthio-N(6)-dimethylallyladenosine synthase.